We begin with the raw amino-acid sequence, 121 residues long: Small ribosomal subunit protein uS13 (121 aa).

The interval 97-121 (VRGQRTRTNARTRRGARKTVAGKKK) is disordered. The segment covering 100–121 (QRTRTNARTRRGARKTVAGKKK) has biased composition (basic residues).

This sequence belongs to the universal ribosomal protein uS13 family. In terms of assembly, part of the 30S ribosomal subunit. Forms a loose heterodimer with protein S19. Forms two bridges to the 50S subunit in the 70S ribosome.

Its function is as follows. Located at the top of the head of the 30S subunit, it contacts several helices of the 16S rRNA. In the 70S ribosome it contacts the 23S rRNA (bridge B1a) and protein L5 of the 50S subunit (bridge B1b), connecting the 2 subunits; these bridges are implicated in subunit movement. Contacts the tRNAs in the A and P-sites. This is Small ribosomal subunit protein uS13 from Synechococcus sp. (strain WH7803).